We begin with the raw amino-acid sequence, 108 residues long: UPF0060 membrane protein Nwi_1459 (108 aa).

4 helical membrane-spanning segments follow: residues 5–25, 31–51, 61–81, and 88–108; these read AAYVGAAIAEIAGCFAFWAWL, VWWLVPGMASLALFAYLLTLV, AAYGGIYIMASLGWLWSVEGI, and LAGALICLIGAVVILIGPHEI.

This sequence belongs to the UPF0060 family.

It is found in the cell inner membrane. This chain is UPF0060 membrane protein Nwi_1459, found in Nitrobacter winogradskyi (strain ATCC 25391 / DSM 10237 / CIP 104748 / NCIMB 11846 / Nb-255).